We begin with the raw amino-acid sequence, 349 residues long: Anthranilate phosphoribosyltransferase (349 aa).

5-phospho-alpha-D-ribose 1-diphosphate contacts are provided by residues glycine 82, 85-86, 92-95, 110-118, and serine 122; these read GD, NVST, and KHGNRGVSS. Anthranilate is bound at residue glycine 82. Serine 94 lines the Mg(2+) pocket. Asparagine 113 is a binding site for anthranilate. Arginine 168 serves as a coordination point for anthranilate. The Mg(2+) site is built by aspartate 227 and glutamate 228.

Belongs to the anthranilate phosphoribosyltransferase family. In terms of assembly, homodimer. Mg(2+) serves as cofactor.

The enzyme catalyses N-(5-phospho-beta-D-ribosyl)anthranilate + diphosphate = 5-phospho-alpha-D-ribose 1-diphosphate + anthranilate. The protein operates within amino-acid biosynthesis; L-tryptophan biosynthesis; L-tryptophan from chorismate: step 2/5. In terms of biological role, catalyzes the transfer of the phosphoribosyl group of 5-phosphorylribose-1-pyrophosphate (PRPP) to anthranilate to yield N-(5'-phosphoribosyl)-anthranilate (PRA). The polypeptide is Anthranilate phosphoribosyltransferase (Acinetobacter baumannii (strain ATCC 17978 / DSM 105126 / CIP 53.77 / LMG 1025 / NCDC KC755 / 5377)).